The following is a 500-amino-acid chain: Matrilin-1 (500 aa).

The signal sequence occupies residues 1-29; the sequence is MKVTSGPAFALCSLLLLLLLLLQVPDSLS. Residues 30–226 enclose the VWFA 1 domain; the sequence is LVPQPRGHLC…AKKFQEAFCV (197 aa). Residue N80 is glycosylated (N-linked (GlcNAc...) asparagine). One can recognise an EGF-like domain in the interval 227 to 267; the sequence is VSDLCATGDHDCEQLCVSSPGSYTCACHEGFTLNSDGKTCN. 3 disulfides stabilise this stretch: C231/C242, C238/C251, and C253/C266. Positions 268-457 constitute a VWFA 2 domain; sequence VCRGGGSGSA…GKKLQKQICV (190 aa). N348 carries N-linked (GlcNAc...) asparagine glycosylation. A coiled-coil region spans residues 471–499; it reads EAKVEGLLQALTRKLEAVSGRLAVLENRI.

As to quaternary structure, homotrimer. Part of a complex composed of MATN1 (via VWFA1 domain), type 2 collagens and type 6 collagens. Forms a complex (via covalent bonds) with ACAN; the interaction increases in abundance with increasing age of the organism via an increase in occupancy of MATN1 binding sites. Interacts with COMP. Post-translationally, N-glycosylated; reduces binding affinity for type 2 collagens. In terms of tissue distribution, expressed in femoral head articular cartilage. Expressed in the trachea and extraskeletal tissue around the eye.

The protein localises to the secreted. Its subcellular location is the extracellular space. It localises to the extracellular matrix. Functionally, a major component of the extracellular matrix of non-articular cartilage. Binds to type 2 collagens and forms long concatenated protein networks as part of the extracellular matrix. Required for the network-like organization and bundling of collagen fibrils surrounding chondrocytes in the zones of maturation and hypertrophy. Required for mechanotransduction and adaption to mechanical loading in cartilage chondrocytes, resulting in an increase in expression of the extracellular matrix components ACAN and COL2A1. Acts as a moderator of angiogenesis in response to injury. This Mus musculus (Mouse) protein is Matrilin-1.